Reading from the N-terminus, the 433-residue chain is Mitochondrial inner membrane protein OXA1L (433 aa).

Over 1–108 the chain is Mitochondrial intermembrane; the sequence is MARNLVCGRW…QCATEPSFTE (108 aa). Residues 109–129 traverse the membrane as a helical segment; that stretch reads LGLGSYTPVGLIQNLLEYIHV. Residues 130–134 lie on the Mitochondrial matrix side of the membrane; it reads DLGLP. A helical transmembrane segment spans residues 135–155; that stretch reads WWGAIATCTVLARCLVFPLIV. Residues 156–207 lie on the Mitochondrial intermembrane side of the membrane; sequence KGQREAAKIHNHMPEMQKFSARIREAKLAGDQAEFYKATIEMTRYQKKHDIK. Residues 208–228 traverse the membrane as a helical segment; sequence LLRPLILPLTQAPVFISFFIA. At 229-255 the chain is on the mitochondrial matrix side; the sequence is LREMANLPVPSLQTGGLWWFQDLTVSD. The helical transmembrane segment at 256–276 threads the bilayer; it reads PIYVLPLVVTATMWCVLELGA. At 277-293 the chain is on the mitochondrial intermembrane side; sequence ETGVQSNDLQFMRNIIR. The chain crosses the membrane as a helical span at residues 294–314; sequence VMPLVVLPVTIHFPSAVFMYW. Over 315–433 the chain is Mitochondrial matrix; the sequence is LSSNVFSLCQ…AKKPWQDTLG (119 aa). S359 carries the post-translational modification Phosphoserine. Phosphothreonine is present on residues T395 and T397. A disordered region spans residues 397-433; that stretch reads THNPLLQHDPSHPPKAPNSNNSSIKANAKKPWQDTLG. A compositionally biased stretch (low complexity) spans 413-426; that stretch reads PNSNNSSIKANAKK.

It belongs to the OXA1/ALB3/YidC family. As to quaternary structure, monomer; predominantly monomeric at low salt concentrations. Homooligomer; predominantly homooligomeric at high salt concentrations. Associates with the mitochondrial ribosome. Associates preferentially as a dimer with the large ribosomal subunit 39S of the mitochondrial ribosome. Interacts with OXA1L; promoting cotranslational quality control in mitochondria.

It localises to the mitochondrion inner membrane. Mitochondrial membrane insertase that mediates the cotranslational insertion of integral membrane proteins into the mitochondrial inner membrane. Essential for the activity and assembly of cytochrome oxidase. Required for the correct biogenesis of ATP synthase and complex I in mitochondria. This is Mitochondrial inner membrane protein OXA1L (Oxa1l) from Mus musculus (Mouse).